The following is a 322-amino-acid chain: Cytochrome c biogenesis protein CcsA (322 aa).

A run of 6 helical transmembrane segments spans residues 9–29 (ILTH…LITL), 44–64 (GMIV…ASSG), 143–163 (MLLS…ILII), 226–246 (VISL…VWAN), 259–276 (ETWA…LHSR), and 289–309 (IASI…LLGI).

Belongs to the CcmF/CycK/Ccl1/NrfE/CcsA family. May interact with Ccs1.

The protein resides in the plastid. The protein localises to the chloroplast thylakoid membrane. Functionally, required during biogenesis of c-type cytochromes (cytochrome c6 and cytochrome f) at the step of heme attachment. The protein is Cytochrome c biogenesis protein CcsA of Triticum aestivum (Wheat).